A 379-amino-acid chain; its full sequence is Odorant receptor 23a (379 aa).

Topologically, residues 1 to 36 are cytoplasmic; it reads MKLSETLKIDYFRVQLNAWRICGALDLSEGRYWSWS. A helical membrane pass occupies residues 37–57; sequence MLLCILVYLPTPMLLRGVYSF. Topologically, residues 58-64 are extracellular; it reads EDPVENN. A glycan (N-linked (GlcNAc...) asparagine) is linked at N64. Residues 65-85 form a helical membrane-spanning segment; that stretch reads FSLSLTVTSLSNLMKFCMYVA. At 86 to 125 the chain is on the cytoplasmic side; that stretch reads QLTKMVEVQSLIGQLDARVSGESQSERHRNMTEHLLRMSK. Residues 126-146 traverse the membrane as a helical segment; the sequence is LFQITYAVVFIIAAVPFVFET. Residues 147-162 lie on the Extracellular side of the membrane; it reads ELSLPMPMWFPFDWKN. A helical transmembrane segment spans residues 163–183; sequence SMVAYIGALVFQEIGYVFQIM. Over 184–253 the chain is Cytoplasmic; sequence QCFAADSFPP…TKSLVSYPMM (70 aa). A helical membrane pass occupies residues 254–274; sequence VQFMVIGINIAITLFVLIFYV. At 275–280 the chain is on the extracellular side; it reads ETLYDR. Residues 281 to 301 form a helical membrane-spanning segment; the sequence is IYYLCFLLGITVQTYPLCYYG. The Cytoplasmic segment spans residues 302 to 340; it reads TMVQESFAELHYAVFCSNWVDQSASYRGHMLILAERTKR. The helical transmembrane segment at 341–361 threads the bilayer; it reads MQLLLAGNLVPIHLSTYVACW. At 362–379 the chain is on the extracellular side; the sequence is KGAYSFFTLMADRDGLGS.

It belongs to the insect chemoreceptor superfamily. Heteromeric odorant receptor channel (TC 1.A.69) family. Or2a subfamily. Interacts with Orco. Complexes exist early in the endomembrane system in olfactory sensory neurons (OSNs), coupling these complexes to the conserved ciliary trafficking pathway. As to expression, expressed in 10-40 sensory cells in the third antenna segment and in the maxillary palp.

Its subcellular location is the cell membrane. Odorant receptor which mediates acceptance or avoidance behavior, depending on its substrates. The odorant receptor repertoire encodes a large collection of odor stimuli that vary widely in identity, intensity, and duration. May form a complex with Orco to form odorant-sensing units, providing sensitive and prolonged odorant signaling and calcium permeability. The polypeptide is Odorant receptor 23a (Or23a) (Drosophila melanogaster (Fruit fly)).